The chain runs to 157 residues: Nascent polypeptide-associated complex subunit alpha (157 aa).

Residues 6–71 (TTDESHIHKT…LGSPVNLHQL (66 aa)) enclose the NAC-A/B domain. Residues 81 to 107 (SSKDQEGPGLYDEIHSDPQEDGVKEAE) show a composition bias toward basic and acidic residues. Residues 81–116 (SSKDQEGPGLYDEIHSDPQEDGVKEAEEITVDPSDE) form a disordered region. A UBA domain is found at 118 to 157 (LSEEDIKLISSQVKASRNDIIKALVESEYDVVDAMMKLTK).

The protein belongs to the NAC-alpha family.

Its subcellular location is the cytoplasm. It localises to the nucleus. Functionally, may be involved in mitochondrial protein import by enhancing productive ribosome interactions with the outer mitochondrial membrane and blocks the inappropriate interaction of ribosomes translating non-secretory nascent polypeptides with translocation sites in the membrane of the endoplasmic reticulum. EGD2 may also be involved in transcription regulation. The polypeptide is Nascent polypeptide-associated complex subunit alpha (EGD2) (Encephalitozoon cuniculi (strain GB-M1) (Microsporidian parasite)).